Consider the following 165-residue polypeptide: Chorismate pyruvate-lyase (165 aa).

Substrate-binding residues include M35, R77, L115, and E156.

Belongs to the UbiC family. In terms of assembly, monomer.

Its subcellular location is the cytoplasm. It catalyses the reaction chorismate = 4-hydroxybenzoate + pyruvate. The protein operates within cofactor biosynthesis; ubiquinone biosynthesis. Its function is as follows. Removes the pyruvyl group from chorismate, with concomitant aromatization of the ring, to provide 4-hydroxybenzoate (4HB) for the ubiquinone pathway. This chain is Chorismate pyruvate-lyase, found in Escherichia coli (strain K12 / MC4100 / BW2952).